The sequence spans 207 residues: LexA repressor (207 aa).

A DNA-binding region (H-T-H motif) is located at residues Val28–Ala48. Active-site for autocatalytic cleavage activity residues include Ser129 and Lys167.

Belongs to the peptidase S24 family. As to quaternary structure, homodimer.

The enzyme catalyses Hydrolysis of Ala-|-Gly bond in repressor LexA.. Represses a number of genes involved in the response to DNA damage (SOS response), including recA and lexA. In the presence of single-stranded DNA, RecA interacts with LexA causing an autocatalytic cleavage which disrupts the DNA-binding part of LexA, leading to derepression of the SOS regulon and eventually DNA repair. The sequence is that of LexA repressor from Geobacillus thermodenitrificans (strain NG80-2).